Consider the following 430-residue polypeptide: Glutamate-1-semialdehyde 2,1-aminomutase (430 aa).

N6-(pyridoxal phosphate)lysine is present on Lys-267.

The protein belongs to the class-III pyridoxal-phosphate-dependent aminotransferase family. HemL subfamily. Homodimer. The cofactor is pyridoxal 5'-phosphate.

The protein resides in the cytoplasm. The enzyme catalyses (S)-4-amino-5-oxopentanoate = 5-aminolevulinate. It functions in the pathway porphyrin-containing compound metabolism; protoporphyrin-IX biosynthesis; 5-aminolevulinate from L-glutamyl-tRNA(Glu): step 2/2. The chain is Glutamate-1-semialdehyde 2,1-aminomutase from Natranaerobius thermophilus (strain ATCC BAA-1301 / DSM 18059 / JW/NM-WN-LF).